The following is a 106-amino-acid chain: Iron-sulfur cluster assembly protein CyaY (106 aa).

This sequence belongs to the frataxin family.

In terms of biological role, involved in iron-sulfur (Fe-S) cluster assembly. May act as a regulator of Fe-S biogenesis. This chain is Iron-sulfur cluster assembly protein CyaY, found in Escherichia coli O7:K1 (strain IAI39 / ExPEC).